Reading from the N-terminus, the 351-residue chain is Cytosolic sulfotransferase 11 (351 aa).

98–103 (KGGTTW) is a 3'-phosphoadenylyl sulfate binding site. His-163 serves as the catalytic Proton acceptor. 3'-phosphoadenylyl sulfate-binding positions include Arg-184, Ser-192, Tyr-250, and 316–318 (RKG).

This sequence belongs to the sulfotransferase 1 family.

It localises to the cytoplasm. In terms of biological role, sulfotransferase that utilizes 3'-phospho-5'-adenylyl sulfate (PAPS) as sulfonate donor. This is Cytosolic sulfotransferase 11 (SOT11) from Arabidopsis thaliana (Mouse-ear cress).